The sequence spans 38 residues: Photosystem II reaction center protein L (38 aa).

Residues Ser17–Phe37 form a helical membrane-spanning segment.

Belongs to the PsbL family. In terms of assembly, PSII is composed of 1 copy each of membrane proteins PsbA, PsbB, PsbC, PsbD, PsbE, PsbF, PsbH, PsbI, PsbJ, PsbK, PsbL, PsbM, PsbT, PsbX, PsbY, PsbZ, Psb30/Ycf12, at least 3 peripheral proteins of the oxygen-evolving complex and a large number of cofactors. It forms dimeric complexes.

The protein resides in the plastid. It localises to the chloroplast thylakoid membrane. Its function is as follows. One of the components of the core complex of photosystem II (PSII). PSII is a light-driven water:plastoquinone oxidoreductase that uses light energy to abstract electrons from H(2)O, generating O(2) and a proton gradient subsequently used for ATP formation. It consists of a core antenna complex that captures photons, and an electron transfer chain that converts photonic excitation into a charge separation. This subunit is found at the monomer-monomer interface and is required for correct PSII assembly and/or dimerization. In Amborella trichopoda, this protein is Photosystem II reaction center protein L.